The primary structure comprises 529 residues: ATP synthase F(1) complex catalytic subunit beta, mitochondrial (529 aa).

The transit peptide at 1 to 46 directs the protein to the mitochondrion; it reads MLSLVGRVASASASGALRGLSPSAALPQAQLLLRAAPAGVHPARDY. Residue Ser106 is glycosylated (O-linked (GlcNAc) serine). Residues Lys124, Lys133, and Lys161 each carry the N6-acetyllysine; alternate modification. Lys124, Lys133, and Lys161 each carry N6-succinyllysine; alternate. At Lys198 the chain carries N6-acetyllysine. Residues Gly209, Val210, Gly211, Lys212, Thr213, and Val214 each coordinate ADP. An ATP-binding site is contributed by Gly209. Residues Gly209, Val210, Gly211, Lys212, and Thr213 each coordinate phosphate. ATP is bound by residues Gly211, Lys212, Thr213, and Val214. Thr213 is a Mg(2+) binding site. Glu238 is a Mg(2+) binding site. Arg239 is a binding site for ATP. An N6-acetyllysine; alternate mark is found at Lys259 and Lys264. N6-succinyllysine; alternate occurs at positions 259 and 264. Phosphothreonine is present on Thr312. Lys426 carries the post-translational modification N6-acetyllysine. Ser433 carries the phosphoserine modification. An N6-acetyllysine mark is found at Lys480 and Lys485. The residue at position 522 (Lys522) is an N6-acetyllysine; alternate. Lys522 carries the post-translational modification N6-succinyllysine; alternate. At Ser529 the chain carries Phosphoserine.

This sequence belongs to the ATPase alpha/beta chains family. Homotrimer. Component of the ATP synthase complex composed at least of ATP5F1A/subunit alpha, ATP5F1B/subunit beta, ATP5MC1/subunit c (homooctomer), MT-ATP6/subunit a, MT-ATP8/subunit 8, ATP5ME/subunit e, ATP5MF/subunit f, ATP5MG/subunit g, ATP5MK/subunit k, ATP5MJ/subunit j, ATP5F1C/subunit gamma, ATP5F1D/subunit delta, ATP5F1E/subunit epsilon, ATP5PF/subunit F6, ATP5PB/subunit b, ATP5PD/subunit d, ATP5PO/subunit OSCP. ATP synthase complex consists of a soluble F(1) head domain (subunits alpha(3) and beta(3)) - the catalytic core - and a membrane F(0) domain - the membrane proton channel (subunits c, a, 8, e, f, g, k and j). These two domains are linked by a central stalk (subunits gamma, delta, and epsilon) rotating inside the F1 region and a stationary peripheral stalk (subunits F6, b, d, and OSCP). Interacts with PPIF. Interacts with BCL2L1 isoform BCL-X(L); the interaction mediates the association of BCL2L1 isoform BCL-X(L) with the mitochondrial membrane F(1)F(0) ATP synthase and enhances neurons metabolic efficiency. Interacts with CLN5 and PPT1. Interacts with S100A1; this interaction increases F1-ATPase activity. Interacts with MTLN. Interacts with TTC5/STRAP; the interaction results in decreased mitochondrial ATP production. Post-translationally, acetylation of Lys-133 is observed in liver mitochondria from fasted mice but not from fed mice.

The protein localises to the mitochondrion inner membrane. It catalyses the reaction ATP + H2O + 4 H(+)(in) = ADP + phosphate + 5 H(+)(out). Its function is as follows. Catalytic subunit beta, of the mitochondrial membrane ATP synthase complex (F(1)F(0) ATP synthase or Complex V) that produces ATP from ADP in the presence of a proton gradient across the membrane which is generated by electron transport complexes of the respiratory chain. ATP synthase complex consist of a soluble F(1) head domain - the catalytic core - and a membrane F(1) domain - the membrane proton channel. These two domains are linked by a central stalk rotating inside the F(1) region and a stationary peripheral stalk. During catalysis, ATP synthesis in the catalytic domain of F(1) is coupled via a rotary mechanism of the central stalk subunits to proton translocation. In vivo, can only synthesize ATP although its ATP hydrolase activity can be activated artificially in vitro. With the subunit alpha (ATP5F1A), forms the catalytic core in the F(1) domain. In Mus musculus (Mouse), this protein is ATP synthase F(1) complex catalytic subunit beta, mitochondrial.